Here is a 562-residue protein sequence, read N- to C-terminus: T-complex protein 1 subunit epsilon (562 aa).

The protein belongs to the TCP-1 chaperonin family. As to quaternary structure, heterooligomeric complex of about 850 to 900 kDa that forms two stacked rings, 12 to 16 nm in diameter.

The protein resides in the cytoplasm. Its function is as follows. Molecular chaperone; assists the folding of proteins upon ATP hydrolysis. Known to play a role, in vitro, in the folding of actin and tubulin. In yeast may play a role in mitotic spindle formation. The sequence is that of T-complex protein 1 subunit epsilon (CCT5) from Saccharomyces cerevisiae (strain ATCC 204508 / S288c) (Baker's yeast).